The sequence spans 78 residues: HssA/B-like protein 29 (78 aa).

Residues Met1–Met31 are disordered.

This sequence belongs to the hssA/B family.

The chain is HssA/B-like protein 29 (hssl29) from Dictyostelium discoideum (Social amoeba).